The following is a 234-amino-acid chain: Phosphoribosylaminoimidazole-succinocarboxamide synthase (234 aa).

The protein belongs to the SAICAR synthetase family.

It carries out the reaction 5-amino-1-(5-phospho-D-ribosyl)imidazole-4-carboxylate + L-aspartate + ATP = (2S)-2-[5-amino-1-(5-phospho-beta-D-ribosyl)imidazole-4-carboxamido]succinate + ADP + phosphate + 2 H(+). Its pathway is purine metabolism; IMP biosynthesis via de novo pathway; 5-amino-1-(5-phospho-D-ribosyl)imidazole-4-carboxamide from 5-amino-1-(5-phospho-D-ribosyl)imidazole-4-carboxylate: step 1/2. In Pyrobaculum aerophilum (strain ATCC 51768 / DSM 7523 / JCM 9630 / CIP 104966 / NBRC 100827 / IM2), this protein is Phosphoribosylaminoimidazole-succinocarboxamide synthase.